A 223-amino-acid chain; its full sequence is UPF0441 protein KPK_0672 (223 aa).

Positions 165–223 (SYGAAQPGRTMNVPKTAMAPKPATTTTVTRGGFGESVAKQSTMQRSAAGSTSSSRSMGG) are disordered. Composition is skewed to low complexity over residues 177–193 (VPKTAMAPKPATTTTVT) and 209–223 (RSAAGSTSSSRSMGG).

This sequence belongs to the UPF0441 family.

In Klebsiella pneumoniae (strain 342), this protein is UPF0441 protein KPK_0672.